A 390-amino-acid polypeptide reads, in one-letter code: METFLLTSESVNEGHPDKLCDQVSDAILDACLEQDPESKVACETCTKTNMVMVFGEITTKANVDYEKIVRDTCREIGFISADVGLDADNCKVLVNIEQQSPDIAQGVHGHLTKKPEEIGAGDQGHMFGYATDETPELMPLTHVLATKLGAKLTEVRKNKTCPWLRPDGKTQVTVEYKNDNGAMVPIRVHTVLISTQHDETVTNDQIAQDLKEHVIKPVIPAKYLDENTIFHLNPSGRFVIGGPHGDAGLTGRKIIIDTYGGWGAHGGGAFSGKDPTKVDRSGAYIVRQAAKSVVASGLARRCIVQVSYAIGVAEPLSVFVDTYKTGTIPDKDILVLIKENFDFRPGMMSINLDLLRGGNFRYQKTAAYGHFGRDDPDFTWETVKVLKPKA.

Glutamate 9 is a binding site for Mg(2+). Position 15 (histidine 15) interacts with ATP. Glutamate 43 contributes to the K(+) binding site. Positions 56 and 99 each coordinate L-methionine. ATP-binding positions include 167–169, 235–238, aspartate 246, 252–253, alanine 269, lysine 273, and lysine 277; these read DGK, SGRF, and RK. Residue aspartate 246 participates in L-methionine binding. Residue lysine 277 coordinates L-methionine.

This sequence belongs to the AdoMet synthase family. In terms of assembly, homotetramer. The cofactor is Mn(2+). Mg(2+) is required as a cofactor. Requires Co(2+) as cofactor. It depends on K(+) as a cofactor.

The protein resides in the cytoplasm. The enzyme catalyses L-methionine + ATP + H2O = S-adenosyl-L-methionine + phosphate + diphosphate. It participates in amino-acid biosynthesis; S-adenosyl-L-methionine biosynthesis; S-adenosyl-L-methionine from L-methionine: step 1/1. Its function is as follows. Catalyzes the formation of S-adenosylmethionine from methionine and ATP. The reaction comprises two steps that are both catalyzed by the same enzyme: formation of S-adenosylmethionine (AdoMet) and triphosphate, and subsequent hydrolysis of the triphosphate. The protein is S-adenosylmethionine synthase 2 (METK2) of Solanum tuberosum (Potato).